Here is an 829-residue protein sequence, read N- to C-terminus: Probable beta-glucosidase H (829 aa).

Asn-13 is a glycosylation site (N-linked (GlcNAc...) asparagine). The active site involves Asp-225. Residues Asn-304, Asn-473, Asn-602, Asn-627, and Asn-664 are each glycosylated (N-linked (GlcNAc...) asparagine). The PA14 domain maps to 389–548; the sequence is RMLSNAVIHF…DPEQMVANAV (160 aa).

It belongs to the glycosyl hydrolase 3 family.

The protein resides in the secreted. It carries out the reaction Hydrolysis of terminal, non-reducing beta-D-glucosyl residues with release of beta-D-glucose.. It participates in glycan metabolism; cellulose degradation. Its function is as follows. Beta-glucosidases are one of a number of cellulolytic enzymes involved in the degradation of cellulosic biomass. Catalyzes the last step releasing glucose from the inhibitory cellobiose. The sequence is that of Probable beta-glucosidase H (bglH) from Neosartorya fischeri (strain ATCC 1020 / DSM 3700 / CBS 544.65 / FGSC A1164 / JCM 1740 / NRRL 181 / WB 181) (Aspergillus fischerianus).